We begin with the raw amino-acid sequence, 210 residues long: Dynactin-associated protein (210 aa).

Over 1–113 (MVADIKGNEQ…YCRNDWSMWK (113 aa)) the chain is Cytoplasmic. The helical; Signal-anchor for type II membrane protein transmembrane segment at 114–134 (VFLACLLACVIMTAIGVLIIC) threads the bilayer. The Extracellular portion of the chain corresponds to 135-210 (LVNNKGSANS…PITVAPTDHL (76 aa)). Positions 168 to 210 (ACPPTMTTTSTVPASTATESTTSTATAATTSTEPITVAPTDHL) are disordered. Over residues 171–203 (PTMTTTSTVPASTATESTTSTATAATTSTEPIT) the composition is skewed to low complexity.

In terms of assembly, interacts with DCTN1 and DCTN2. Expressed in fibroblast and numerous cancer cell lines (at protein level).

Its subcellular location is the golgi apparatus membrane. It is found in the cell membrane. Functionally, plays a role in the regulation of cell proliferation. Promotes activation of the AKT1 signaling pathway. Promotes phosphorylation of AKT1 at 'Ser-473'. The sequence is that of Dynactin-associated protein (DYNAP) from Homo sapiens (Human).